We begin with the raw amino-acid sequence, 274 residues long: Large ribosomal subunit protein uL2cz/uL2cy (274 aa).

2 disordered regions span residues 1-25 (MAIH…VKSN) and 224-274 (NPVD…RRSK).

It belongs to the universal ribosomal protein uL2 family. In terms of assembly, part of the 50S ribosomal subunit.

The protein localises to the plastid. Its subcellular location is the chloroplast. This chain is Large ribosomal subunit protein uL2cz/uL2cy (rpl2-A), found in Cucumis sativus (Cucumber).